The chain runs to 291 residues: Transmembrane O-methyltransferase (291 aa).

The helical transmembrane segment at 31–51 (VGTMSPAIALAFLPLVVTLLV) threads the bilayer. S-adenosyl-L-methionine is bound by residues E137, 139-140 (GT), S145, E163, and S193.

Belongs to the class I-like SAM-binding methyltransferase superfamily. Cation-dependent O-methyltransferase family. As to quaternary structure, interacts with LHFPL5, PCDH15, TMC1, TMC2 and TMIE. Interacts directly with TMC1. The interaction of TOMT with TMC1 and TMC2 is required for the transportation of TMC1/2 into the stereocilia of hair cells.

It is found in the membrane. It localises to the cytoplasm. The protein resides in the endoplasmic reticulum. The catalysed reaction is a catechol + S-adenosyl-L-methionine = a guaiacol + S-adenosyl-L-homocysteine + H(+). Functionally, catalyzes the O-methylation, and thereby the inactivation, of catecholamine neurotransmitters and catechol hormones. Required for auditory function. Component of the cochlear hair cell's mechanotransduction (MET) machinery. Involved in the assembly of the asymmetric tip-link MET complex. Required for transportation of TMC1 and TMC2 proteins into the mechanically sensitive stereocilia of the hair cells. The function in MET is independent of the enzymatic activity. This Homo sapiens (Human) protein is Transmembrane O-methyltransferase.